We begin with the raw amino-acid sequence, 218 residues long: Ras-related protein Rab-4A (218 aa).

GTP-binding residues include Gly23, Thr24, Gly25, Lys26, Ser27, Cys28, Ser42, His44, and Thr45. Ser27 is a Mg(2+) binding site. The Switch 1 motif lies at 44–49; the sequence is HTIGVE. Mg(2+) contacts are provided by Thr45 and Asp68. The Switch 2 motif lies at 70–79; that stretch reads AGQERFRSVT. Position 71 (Gly71) interacts with GTP. Gln72 carries the 5-glutamyl serotonin modification. Residues Asn126, Lys127, Asp129, Ala157, and Leu158 each contribute to the GTP site. Ser190 bears the Phosphoserine mark. Ser204 is modified (phosphoserine; by CDK1). S-geranylgeranyl cysteine attachment occurs at residues Cys216 and Cys218. Cys218 carries the post-translational modification Cysteine methyl ester.

This sequence belongs to the small GTPase superfamily. Rab family. As to quaternary structure, interacts with SGSM1, SGSM2 and SGSM3. Interacts with RAB11FIP1, RABEP1, ZFYVE20 and RUFY1. Interacts (membrane-bound form) with NDRG1; the interaction involves NDRG1 in vesicular recycling of E-cadherin. Interacts (in GTP-bound form) with GRIPAP1 (via N-terminus). Interacts with RABEP1 and RBSN. Does not interact with HPS4. Does not interact with HPS4. Interacts with RABEP2; this interaction may mediate VEGFR2 cell surface expression. Requires Mg(2+) as cofactor. Serotonylation of Gln-72 by TGM2 during activation and aggregation of platelets leads to constitutive activation of GTPase activity. Post-translationally, phosphorylated by CDK1 kinase during mitosis. Expressed in the central nervous system, including cortex, cerebellum, midbrain and spinal cord, and in the kidney, lung, liver and spleen.

The protein resides in the membrane. It localises to the cytoplasm. The protein localises to the early endosome membrane. Its subcellular location is the recycling endosome membrane. It carries out the reaction GTP + H2O = GDP + phosphate + H(+). Regulated by guanine nucleotide exchange factors (GEFs) which promote the exchange of bound GDP for free GTP. Regulated by GTPase activating proteins (GAPs) which increase the GTP hydrolysis activity. Inhibited by GDP dissociation inhibitors (GDIs). Functionally, the small GTPases Rab are key regulators of intracellular membrane trafficking, from the formation of transport vesicles to their fusion with membranes. Rabs cycle between an inactive GDP-bound form and an active GTP-bound form that is able to recruit to membranes different sets of downstream effectors directly responsible for vesicle formation, movement, tethering and fusion. RAB4A is involved in protein transport. Also plays a role in vesicular traffic. Mediates VEGFR2 endosomal trafficking to enhance VEGFR2 signaling. Acts as a regulator of platelet alpha-granule release during activation and aggregation of platelets. The polypeptide is Ras-related protein Rab-4A (Mus musculus (Mouse)).